We begin with the raw amino-acid sequence, 129 residues long: Follitropin subunit beta (129 aa).

An N-terminal signal peptide occupies residues 1 to 20 (MKSVQFCFLFCCWRAICCRS). 6 disulfide bridges follow: cysteine 21–cysteine 69, cysteine 35–cysteine 84, cysteine 38–cysteine 122, cysteine 46–cysteine 100, cysteine 50–cysteine 102, and cysteine 105–cysteine 112. 2 N-linked (GlcNAc...) asparagine glycosylation sites follow: asparagine 25 and asparagine 42.

This sequence belongs to the glycoprotein hormones subunit beta family. As to quaternary structure, heterodimer. The active follitropin is a heterodimer composed of an alpha chain/CGA shared with other hormones and a unique beta chain/FSHB shown here.

Its subcellular location is the secreted. Its function is as follows. Together with the alpha chain CGA constitutes follitropin, the follicle-stimulating hormone, and provides its biological specificity to the hormone heterodimer. Binds FSHR, a G protein-coupled receptor, on target cells to activate downstream signaling pathways. Follitropin is involved in follicle development and spermatogenesis in reproductive organs. The protein is Follitropin subunit beta (FSHB) of Bos taurus (Bovine).